A 264-amino-acid polypeptide reads, in one-letter code: Acetyl-coenzyme A carboxylase carboxyl transferase subunit beta (264 aa).

The region spanning 4–264 (LWVKCKQCQQ…CGNSLEGVES (261 aa)) is the CoA carboxyltransferase N-terminal domain. Zn(2+) is bound by residues cysteine 8, cysteine 11, cysteine 27, and cysteine 29. The C4-type zinc-finger motif lies at 8–29 (CKQCQQILLTKELEKNLKVCRC).

The protein belongs to the AccD/PCCB family. As to quaternary structure, acetyl-CoA carboxylase is a heterohexamer composed of biotin carboxyl carrier protein (AccB), biotin carboxylase (AccC) and two subunits each of ACCase subunit alpha (AccA) and ACCase subunit beta (AccD). Requires Zn(2+) as cofactor.

It is found in the cytoplasm. It catalyses the reaction N(6)-carboxybiotinyl-L-lysyl-[protein] + acetyl-CoA = N(6)-biotinyl-L-lysyl-[protein] + malonyl-CoA. Its pathway is lipid metabolism; malonyl-CoA biosynthesis; malonyl-CoA from acetyl-CoA: step 1/1. Functionally, component of the acetyl coenzyme A carboxylase (ACC) complex. Biotin carboxylase (BC) catalyzes the carboxylation of biotin on its carrier protein (BCCP) and then the CO(2) group is transferred by the transcarboxylase to acetyl-CoA to form malonyl-CoA. In Heliobacterium modesticaldum (strain ATCC 51547 / Ice1), this protein is Acetyl-coenzyme A carboxylase carboxyl transferase subunit beta.